Reading from the N-terminus, the 340-residue chain is tRNA N6-adenosine threonylcarbamoyltransferase (340 aa).

The Fe cation site is built by H113 and H117. Substrate is bound by residues 135 to 139 (LVSGG), D169, G182, D186, and N274. D302 contacts Fe cation.

Belongs to the KAE1 / TsaD family. Fe(2+) serves as cofactor.

It is found in the cytoplasm. The enzyme catalyses L-threonylcarbamoyladenylate + adenosine(37) in tRNA = N(6)-L-threonylcarbamoyladenosine(37) in tRNA + AMP + H(+). Functionally, required for the formation of a threonylcarbamoyl group on adenosine at position 37 (t(6)A37) in tRNAs that read codons beginning with adenine. Is involved in the transfer of the threonylcarbamoyl moiety of threonylcarbamoyl-AMP (TC-AMP) to the N6 group of A37, together with TsaE and TsaB. TsaD likely plays a direct catalytic role in this reaction. This is tRNA N6-adenosine threonylcarbamoyltransferase from Mycolicibacterium smegmatis (strain ATCC 700084 / mc(2)155) (Mycobacterium smegmatis).